The primary structure comprises 448 residues: Serine--tRNA ligase (448 aa).

246 to 248 (TAE) contributes to the L-serine binding site. ATP is bound by residues 277–279 (RKE) and valine 293. Position 300 (glutamate 300) interacts with L-serine. 364–367 (ELAS) contributes to the ATP binding site. Threonine 399 is a binding site for L-serine.

The protein belongs to the class-II aminoacyl-tRNA synthetase family. Type-1 seryl-tRNA synthetase subfamily. In terms of assembly, homodimer. The tRNA molecule binds across the dimer.

It is found in the cytoplasm. The catalysed reaction is tRNA(Ser) + L-serine + ATP = L-seryl-tRNA(Ser) + AMP + diphosphate + H(+). It carries out the reaction tRNA(Sec) + L-serine + ATP = L-seryl-tRNA(Sec) + AMP + diphosphate + H(+). The protein operates within aminoacyl-tRNA biosynthesis; selenocysteinyl-tRNA(Sec) biosynthesis; L-seryl-tRNA(Sec) from L-serine and tRNA(Sec): step 1/1. Functionally, catalyzes the attachment of serine to tRNA(Ser). Is also able to aminoacylate tRNA(Sec) with serine, to form the misacylated tRNA L-seryl-tRNA(Sec), which will be further converted into selenocysteinyl-tRNA(Sec). This Pyrobaculum islandicum (strain DSM 4184 / JCM 9189 / GEO3) protein is Serine--tRNA ligase.